Reading from the N-terminus, the 572-residue chain is Proline--tRNA ligase (572 aa).

This sequence belongs to the class-II aminoacyl-tRNA synthetase family. ProS type 1 subfamily. Homodimer.

The protein localises to the cytoplasm. It catalyses the reaction tRNA(Pro) + L-proline + ATP = L-prolyl-tRNA(Pro) + AMP + diphosphate. Functionally, catalyzes the attachment of proline to tRNA(Pro) in a two-step reaction: proline is first activated by ATP to form Pro-AMP and then transferred to the acceptor end of tRNA(Pro). As ProRS can inadvertently accommodate and process non-cognate amino acids such as alanine and cysteine, to avoid such errors it has two additional distinct editing activities against alanine. One activity is designated as 'pretransfer' editing and involves the tRNA(Pro)-independent hydrolysis of activated Ala-AMP. The other activity is designated 'posttransfer' editing and involves deacylation of mischarged Ala-tRNA(Pro). The misacylated Cys-tRNA(Pro) is not edited by ProRS. This Haemophilus influenzae (strain PittEE) protein is Proline--tRNA ligase.